The following is a 736-amino-acid chain: Peroxisomal multifunctional enzyme type 2 (736 aa).

The interval 1 to 305 is (3R)-hydroxyacyl-CoA dehydrogenase; that stretch reads MGSPLRFDGR…IEVLSKIDSE (305 aa). NAD(+) is bound by residues 13–37, leucine 21, and aspartate 40; that span reads LVTGAGAGLGRAYALAFAERGALVV. An N6-acetyllysine; alternate modification is found at lysine 46. Lysine 46 carries the N6-succinyllysine; alternate modification. Residue serine 52 is modified to Phosphoserine. N6-succinyllysine is present on residues lysine 57 and lysine 68. An NAD(+)-binding site is contributed by 75–76; that stretch reads SV. Lysine 84 carries the post-translational modification N6-succinyllysine. Asparagine 99 contributes to the NAD(+) binding site. Serine 151 serves as a coordination point for substrate. The active-site Proton acceptor is the tyrosine 164. NAD(+)-binding positions include 164-168 and 196-199; these read YSAAK and AGSR. Residue threonine 265 is modified to Phosphothreonine. N6-succinyllysine is present on lysine 275. 2 positions are modified to phosphoserine: serine 304 and serine 309. The enoyl-CoA hydratase 2 stretch occupies residues 322–622; that stretch reads SGFAGAIGQK…AKTPSEGGKL (301 aa). Lysine 356 carries the post-translational modification N6-succinyllysine. 406-407 contacts (3R)-3-hydroxydecanoyl-CoA; that stretch reads HG. At lysine 424 the chain carries N6-succinyllysine. (3R)-3-hydroxydecanoyl-CoA-binding positions include lysine 435, 510 to 515, glycine 533, and phenylalanine 563; that span reads DWNPLH. The MaoC-like domain maps to 484-600; the sequence is IPNRPPDAVL…QETGDIVISN (117 aa). N6-acetyllysine is present on lysine 565. N6-succinyllysine occurs at positions 579 and 663. The SCP2 domain occupies 624 to 736; the sequence is STFVFEEIGR…QMILKDYAKL (113 aa). Lysine 669 is subject to N6-acetyllysine. Substrate is bound at residue glutamine 706. Lysine 707 carries the N6-acetyllysine modification. Glutamine 724 is a binding site for substrate. Lysine 725 carries the N6-succinyllysine modification. The Microbody targeting signal motif lies at 734-736; it reads AKL.

It belongs to the short-chain dehydrogenases/reductases (SDR) family. In terms of assembly, homodimer. In terms of tissue distribution, present in many tissues with highest concentrations in liver, heart, prostate and testis.

It localises to the peroxisome. The enzyme catalyses a (3R)-3-hydroxyacyl-CoA + NAD(+) = a 3-oxoacyl-CoA + NADH + H(+). It carries out the reaction a (3R)-3-hydroxyacyl-CoA = a (2E)-enoyl-CoA + H2O. It catalyses the reaction (24R,25R)-3alpha,7alpha,12alpha,24-tetrahydroxy-5beta-cholestan-26-oyl-CoA = (24E)-3alpha,7alpha,12alpha-trihydroxy-5beta-cholest-24-en-26-oyl-CoA + H2O. The catalysed reaction is (2E)-octenoyl-CoA + H2O = (3R)-hydroxyoctanoyl-CoA. The enzyme catalyses (3R)-hydroxyoctanoyl-CoA + NAD(+) = 3-oxooctanoyl-CoA + NADH + H(+). It carries out the reaction (3R)-hydroxyhexadecanoyl-CoA + NAD(+) = 3-oxohexadecanoyl-CoA + NADH + H(+). It catalyses the reaction (2E)-hexadecenedioyl-CoA + H2O = (3R)-hydroxyhexadecanedioyl-CoA. The catalysed reaction is (3R)-hydroxyhexadecanedioyl-CoA + NAD(+) = 3-oxohexadecanedioyl-CoA + NADH + H(+). The enzyme catalyses (3R)-hydroxyhexadecanoyl-CoA = (2E)-hexadecenoyl-CoA + H2O. It carries out the reaction (3R)-3-hydroxydecanoyl-CoA = (2E)-decenoyl-CoA + H2O. It catalyses the reaction (3R)-3-hydroxydecanoyl-CoA + NAD(+) = 3-oxodecanoyl-CoA + NADH + H(+). The catalysed reaction is (24R,25R)-3alpha,7alpha,12alpha,24-tetrahydroxy-5beta-cholestan-26-oyl-CoA + NAD(+) = 3alpha,7alpha,12alpha-trihydroxy-24-oxo-5beta-cholestan-26-oyl-CoA + NADH + H(+). It participates in lipid metabolism; fatty acid beta-oxidation. Functionally, bifunctional enzyme acting on the peroxisomal fatty acid beta-oxidation pathway. Catalyzes two of the four reactions in fatty acid degradation: hydration of 2-enoyl-CoA (trans-2-enoyl-CoA) to produce (3R)-3-hydroxyacyl-CoA, and dehydrogenation of (3R)-3-hydroxyacyl-CoA to produce 3-ketoacyl-CoA (3-oxoacyl-CoA), which is further metabolized by SCPx. Can use straight-chain and branched-chain fatty acids, as well as bile acid intermediates as substrates. The polypeptide is Peroxisomal multifunctional enzyme type 2 (Homo sapiens (Human)).